The sequence spans 233 residues: Superoxide dismutase [Mn] 3.3, mitochondrial (233 aa).

Residues 1-29 (MALRTLASKNALSFALGGAARPSAESARG) constitute a mitochondrion transit peptide. Mn(2+) contacts are provided by His57, His105, Asp194, and His198.

It belongs to the iron/manganese superoxide dismutase family. As to quaternary structure, homotetramer. Mn(2+) is required as a cofactor. In terms of tissue distribution, predominantly expressed in the embryo late in embryogenesis.

The protein resides in the mitochondrion matrix. It catalyses the reaction 2 superoxide + 2 H(+) = H2O2 + O2. In terms of biological role, destroys superoxide anion radicals which are normally produced within the cells and which are toxic to biological systems. The protein is Superoxide dismutase [Mn] 3.3, mitochondrial (SODA.2) of Zea mays (Maize).